The chain runs to 342 residues: tRNA dimethylallyltransferase (342 aa).

The segment covering 1 to 13 has biased composition (polar residues); sequence MNDTTAKTLNCSP. The tract at residues 1–21 is disordered; sequence MNDTTAKTLNCSPASRDGFPE. ATP is bound at residue 40–47; that stretch reads GPTGVGKT. 42–47 is a binding site for substrate; it reads TGVGKT. 2 interaction with substrate tRNA regions span residues 65–68 and 189–193; these read DSMQ and QRILR.

Belongs to the IPP transferase family. As to quaternary structure, monomer. Requires Mg(2+) as cofactor.

It carries out the reaction adenosine(37) in tRNA + dimethylallyl diphosphate = N(6)-dimethylallyladenosine(37) in tRNA + diphosphate. Its function is as follows. Catalyzes the transfer of a dimethylallyl group onto the adenine at position 37 in tRNAs that read codons beginning with uridine, leading to the formation of N6-(dimethylallyl)adenosine (i(6)A). The polypeptide is tRNA dimethylallyltransferase (Syntrophobacter fumaroxidans (strain DSM 10017 / MPOB)).